We begin with the raw amino-acid sequence, 178 residues long: uncharacterized protein (178 aa).

This sequence belongs to the mimivirus L114/R131 family.

This is an uncharacterized protein from Acanthamoeba polyphaga mimivirus (APMV).